The primary structure comprises 461 residues: MDYKETAKRLIELLGGKENIISAAHCATRLRLVMKDESKIDQAQVEELDGVKGAFSSSGQYQIIFGTGLVNKVFDAFSKEADIEREEHVNHQDAAKEKLNPAARFAKTLSNIFVPIIPAIVASGLLMGLLGMINAFHWMSKDSALLQLLDMFSSAAFIFLPILIGVSASKEFGSNPYLGAVIGGIMIHPNLLNPWGLAEATPDYMHLFGFDIALLGYQGTVIPVLLAVYVMSKVEKWTRKVVPHAVDLLVTPFVTVIVTGFVAFIAIGPLGRALGSGITVALTYVYDHAGFVAGLIFGGTYSLIVLTGVHHSFHAIEAGLIADIGKNYLLPIWSMANVAQGGAGLAVFFMAKKAKTKEIALPAAFSAFLGITEPVIFGVNLRYRKPFIAAMIGGALGGAYVVFTHVAANAYGLTGIPMIAIAAPFGFSNLIHYLIGMAIAAVSAFIAAFVMKINEDEERKK.

Positions 4–87 (KETAKRLIEL…SKEADIEREE (84 aa)) constitute a PTS EIIB type-1 domain. Cys-26 functions as the Phosphocysteine intermediate; for EIIB activity in the catalytic mechanism. Residues 107-461 (KTLSNIFVPI…KINEDEERKK (355 aa)) enclose the PTS EIIC type-1 domain. A run of 10 helical transmembrane segments spans residues 112-132 (IFVPIIPAIVASGLLMGLLGM), 148-168 (LLDMFSSAAFIFLPILIGVSA), 178-198 (LGAVIGGIMIHPNLLNPWGLA), 208-228 (FGFDIALLGYQGTVIPVLLAV), 248-268 (LLVTPFVTVIVTGFVAFIAIG), 289-309 (AGFVAGLIFGGTYSLIVLTGV), 329-349 (LLPIWSMANVAQGGAGLAVFF), 359-379 (IALPAAFSAFLGITEPVIFGV), 387-407 (FIAAMIGGALGGAYVVFTHVA), and 430-450 (LIHYLIGMAIAAVSAFIAAFV).

It localises to the cell membrane. It carries out the reaction N(pros)-phospho-L-histidyl-[protein](out) + sucrose = sucrose 6(G)-phosphate(in) + L-histidyl-[protein]. Functionally, the phosphoenolpyruvate-dependent sugar phosphotransferase system (sugar PTS), a major carbohydrate active transport system, catalyzes the phosphorylation of incoming sugar substrates concomitantly with their translocation across the cell membrane. This system is involved in sucrose transport. The sequence is that of PTS system sucrose-specific EIIBC component (sacP) from Bacillus subtilis (strain 168).